A 186-amino-acid polypeptide reads, in one-letter code: Large ribosomal subunit protein uL5c (186 aa).

It belongs to the universal ribosomal protein uL5 family. Part of the 50S ribosomal subunit; contacts the 5S rRNA.

Its subcellular location is the plastid. It localises to the chloroplast. In terms of biological role, binds 5S rRNA, forms part of the central protuberance of the 50S subunit. The polypeptide is Large ribosomal subunit protein uL5c (rpl5) (Pleurastrum terricola (Filamentous green alga)).